A 756-amino-acid polypeptide reads, in one-letter code: Ribonucleoside-diphosphate reductase subunit alpha (756 aa).

Positions 5-95 constitute an ATP-cone domain; that stretch reads LMVTKRDGTQ…IFHLRKKAYG (91 aa). Residues Lys-9, 15 to 21, Thr-55, and Lys-91 contribute to the ATP site; that span reads EQINLDK. Thr-209 is a GDP binding site. Cys-225 and Cys-462 are oxidised to a cystine. DTTP contacts are provided by residues 232 to 234, Arg-262, and Arg-269; that span reads DSL. Asn-437 contacts GDP. The active-site Proton acceptor is the Asn-437. Residue Cys-439 is the Cysteine radical intermediate of the active site. GDP-binding positions include Glu-441 and 623-625; that span reads ETS. The active-site Proton acceptor is the Glu-441.

Belongs to the ribonucleoside diphosphate reductase large chain family. As to quaternary structure, tetramer of two alpha and two beta subunits.

It carries out the reaction a 2'-deoxyribonucleoside 5'-diphosphate + [thioredoxin]-disulfide + H2O = a ribonucleoside 5'-diphosphate + [thioredoxin]-dithiol. Under complex allosteric control mediated by deoxynucleoside triphosphates and ATP binding to separate specificity and activation sites on the alpha subunit. The type of nucleotide bound at the specificity site determines substrate preference. It seems probable that ATP makes the enzyme reduce CDP and UDP, dGTP favors ADP reduction and dTTP favors GDP reduction. Stimulated by ATP and inhibited by dATP binding to the activity site. Functionally, provides the precursors necessary for DNA synthesis. Catalyzes the biosynthesis of deoxyribonucleotides from the corresponding ribonucleotides. This is Ribonucleoside-diphosphate reductase subunit alpha (nrdA) from Haemophilus influenzae (strain ATCC 51907 / DSM 11121 / KW20 / Rd).